Reading from the N-terminus, the 400-residue chain is MDKSLFEQARPILEQIQDNGFEAYYVGGSVRDYVMGRNIHDIDITTSATPDEIESIFSHTIPVGKEHGTINVVFNDENYEVTTFRAEEDYVDHRRPSGVTFVRDLYEDLQRRDFTMNAIAMDTAYKLYDYFDGQQDINNRIIRTVGIAEERFQEDALRMIRCLRFQSQLSFDIATETFEAMRIQMADIKFLSIERIVIELTKLMRGINVEKSFNHLKSLKAFNYMPYFEHLDMNQINVTEAIDLELLIAIVSVKFDINYSLKPLKLSNRQVKDINQYIQIMNALPSIITKEQLKMFVYDYDTHLIKNVMVAADVIKANDIQGHEPLIVNLQTIDETLHRLPMHNRKDMMVNGGVLMAHLNAKSGPWLKDVLRQIEIAIVTGKVSNEETEILKWVDNHVKI.

Residues glycine 28 and arginine 31 each contribute to the ATP site. CTP is bound by residues glycine 28 and arginine 31. Aspartate 41 and aspartate 43 together coordinate Mg(2+). Residues arginine 112, aspartate 155, arginine 158, arginine 161, and arginine 164 each coordinate ATP. Residues arginine 112, aspartate 155, arginine 158, arginine 161, and arginine 164 each coordinate CTP.

It belongs to the tRNA nucleotidyltransferase/poly(A) polymerase family. Bacterial CCA-adding enzyme type 3 subfamily. Homodimer. It depends on Mg(2+) as a cofactor.

The catalysed reaction is a tRNA precursor + 2 CTP + ATP = a tRNA with a 3' CCA end + 3 diphosphate. It carries out the reaction a tRNA with a 3' CCA end + 2 CTP + ATP = a tRNA with a 3' CCACCA end + 3 diphosphate. Catalyzes the addition and repair of the essential 3'-terminal CCA sequence in tRNAs without using a nucleic acid template. Adds these three nucleotides in the order of C, C, and A to the tRNA nucleotide-73, using CTP and ATP as substrates and producing inorganic pyrophosphate. tRNA 3'-terminal CCA addition is required both for tRNA processing and repair. Also involved in tRNA surveillance by mediating tandem CCA addition to generate a CCACCA at the 3' terminus of unstable tRNAs. While stable tRNAs receive only 3'-terminal CCA, unstable tRNAs are marked with CCACCA and rapidly degraded. The chain is CCA-adding enzyme from Staphylococcus aureus (strain MSSA476).